We begin with the raw amino-acid sequence, 150 residues long: MIAVIQRVRKASVEIADKEHASIAAGLLVLLGITHTDEELDVEWLSAKICSLRIFSDEAGKMNRSLSEINGELLVVSQFTLFASTKKGNRPSFIEAARPEQAIPLYEQFIAACEMQLNQKIKTGIFGADMQVALINDGPVTILIDSKNKQ.

The Gly-cisPro motif, important for rejection of L-amino acids signature appears at 138-139 (GP).

Belongs to the DTD family. In terms of assembly, homodimer.

It localises to the cytoplasm. It carries out the reaction glycyl-tRNA(Ala) + H2O = tRNA(Ala) + glycine + H(+). It catalyses the reaction a D-aminoacyl-tRNA + H2O = a tRNA + a D-alpha-amino acid + H(+). An aminoacyl-tRNA editing enzyme that deacylates mischarged D-aminoacyl-tRNAs. Also deacylates mischarged glycyl-tRNA(Ala), protecting cells against glycine mischarging by AlaRS. Acts via tRNA-based rather than protein-based catalysis; rejects L-amino acids rather than detecting D-amino acids in the active site. By recycling D-aminoacyl-tRNA to D-amino acids and free tRNA molecules, this enzyme counteracts the toxicity associated with the formation of D-aminoacyl-tRNA entities in vivo and helps enforce protein L-homochirality. The polypeptide is D-aminoacyl-tRNA deacylase (Cytophaga hutchinsonii (strain ATCC 33406 / DSM 1761 / CIP 103989 / NBRC 15051 / NCIMB 9469 / D465)).